We begin with the raw amino-acid sequence, 893 residues long: POU domain protein 2, isoform B (893 aa).

The interval 586-668 (QMKQQQREDP…STPKPTSGLT (83 aa)) is disordered. Residues 602 to 617 (PLAKSPLRSPSLSPVP) are compositionally biased toward low complexity. The span at 623 to 646 (QQRTPPNSMTANSLGMSSAVMTPN) shows a compositional bias: polar residues. Positions 647 to 665 (TPSMQQQPQLQQSTPKPTS) are enriched in low complexity. The 75-residue stretch at 681 to 755 (EETTDLEELE…LLQKWLEDAD (75 aa)) folds into the POU-specific domain. The segment at residues 786 to 845 (RRKKRTSIETTVRTTLEKAFLMNCKPTSEEISQLSERLNMDKEVIRVWFCNRRQKEKRIN) is a DNA-binding region (homeobox).

The protein belongs to the POU transcription factor family. Class-2 subfamily. In terms of tissue distribution, initial expression in cellular blastoderm stage, then in ectodermal stripes during germband extension. Broad expression in the neuroectoderm followed by limitation to discrete subsets of CNS cells, and expression in specific PNS neurons and support cells.

The protein resides in the nucleus. In terms of biological role, DNA-binding regulatory protein implicated in early development. Involved in neuronal cell fate decision. May act as an octamer-dependent activator of transcription. Could also play an early role in specific ectodermal cells, and a subsequent role in the embryonic nervous system. This Drosophila melanogaster (Fruit fly) protein is POU domain protein 2, isoform B.